The primary structure comprises 444 residues: tRNA modification GTPase MnmE (444 aa).

(6S)-5-formyl-5,6,7,8-tetrahydrofolate is bound by residues R28, E86, and R126. Residues 224-368 enclose the TrmE-type G domain; it reads GFCVVLAGAP…LLDAIQGSAA (145 aa). K(+) is bound at residue N234. Residues 234-239, 253-259, and 278-281 contribute to the GTP site; these read NAGKST, SDIPGTT, and DTAG. S238 is a binding site for Mg(2+). Residues S253, I255, and T258 each contribute to the K(+) site. T259 provides a ligand contact to Mg(2+). A (6S)-5-formyl-5,6,7,8-tetrahydrofolate-binding site is contributed by K444.

This sequence belongs to the TRAFAC class TrmE-Era-EngA-EngB-Septin-like GTPase superfamily. TrmE GTPase family. Homodimer. Heterotetramer of two MnmE and two MnmG subunits. Requires K(+) as cofactor.

It is found in the cytoplasm. Its function is as follows. Exhibits a very high intrinsic GTPase hydrolysis rate. Involved in the addition of a carboxymethylaminomethyl (cmnm) group at the wobble position (U34) of certain tRNAs, forming tRNA-cmnm(5)s(2)U34. In Methylorubrum populi (strain ATCC BAA-705 / NCIMB 13946 / BJ001) (Methylobacterium populi), this protein is tRNA modification GTPase MnmE.